The primary structure comprises 155 residues: Ribonuclease H (155 aa).

In terms of domain architecture, RNase H type-1 spans 1–142 (MLKQVEIFTD…CDELARAAAS (142 aa)). Positions 10, 48, 70, and 134 each coordinate Mg(2+).

The protein belongs to the RNase H family. In terms of assembly, monomer. It depends on Mg(2+) as a cofactor.

Its subcellular location is the cytoplasm. It catalyses the reaction Endonucleolytic cleavage to 5'-phosphomonoester.. In terms of biological role, endonuclease that specifically degrades the RNA of RNA-DNA hybrids. In Klebsiella pneumoniae subsp. pneumoniae (strain ATCC 700721 / MGH 78578), this protein is Ribonuclease H.